We begin with the raw amino-acid sequence, 98 residues long: uncharacterized protein (98 aa).

The tract at residues 53–98 (AALEGGRHRHRGESASGNGIQHGVPPNVALIPSGSTLLTPARSGHV) is disordered.

This is an uncharacterized protein from Mycolicibacterium smegmatis (strain ATCC 700084 / mc(2)155) (Mycobacterium smegmatis).